Here is a 963-residue protein sequence, read N- to C-terminus: Importin-13 (963 aa).

20 HEAT repeats span residues 24 to 54 (ENVE…QAQV), 56 to 88 (PQAW…KISR), 95 to 135 (TDQY…LSMM), 142 to 179 (AVAD…EFQT), 194 to 231 (LAVE…SWVQ), 236 to 268 (LQDC…NAIS), 276 to 325 (VNTL…ALLD), 330 to 372 (WQSF…DDIL), 375 to 438 (EAEK…YEML), 440 to 476 (AELL…FQSI), 487 to 522 (VVPG…WLAD), 524 to 558 (PVMI…CREC), 562 to 600 (LPPY…LLSA), 603 to 648 (VEEI…SNLF), 676 to 716 (PVVV…VKTL), 720 to 754 (FAPM…VHIF), 761 to 803 (FPPI…ALKR), 815 to 845 (VKAV…TELL), 860 to 893 (EDGR…FALN), and 897 to 931 (FSLL…QQIL). The Importin N-terminal domain occupies 45–111 (AQKWLMQAQV…KAQLFTQITR (67 aa)).

This sequence belongs to the importin beta family. As to quaternary structure, interacts with UBC9, RAN, RBM8A, eIF-1A and PAX6.

Its subcellular location is the cytoplasm. The protein localises to the nucleus. Functionally, functions in nuclear protein import as nuclear transport receptor. Serves as receptor for nuclear localization signals (NLS) in cargo substrates. Is thought to mediate docking of the importin/substrate complex to the nuclear pore complex (NPC) through binding to nucleoporin and the complex is subsequently translocated through the pore by an energy requiring, Ran-dependent mechanism. At the nucleoplasmic side of the NPC, Ran binds to the importin, the importin/substrate complex dissociates and importin is re-exported from the nucleus to the cytoplasm where GTP hydrolysis releases Ran. The directionality of nuclear import is thought to be conferred by an asymmetric distribution of the GTP- and GDP-bound forms of Ran between the cytoplasm and nucleus. Mediates the nuclear import of UBC9, the RBM8A/MAGOH complex, PAX6 and probably other members of the paired homeobox family. Also mediates nuclear export of eIF-1A, and the cytoplasmic release of eIF-1A is triggered by the loading of import substrates onto IPO13. The polypeptide is Importin-13 (Ipo13) (Mus musculus (Mouse)).